We begin with the raw amino-acid sequence, 153 residues long: Methylglyoxal synthase (153 aa).

The MGS-like domain maps to 6–153 (RTIAARKHIA…QRYLAERLPS (148 aa)). Substrate is bound by residues His-19, Lys-23, 45-48 (TGTT), and 65-66 (SG). The Proton donor/acceptor role is filled by Asp-71. His-98 is a substrate binding site.

This sequence belongs to the methylglyoxal synthase family.

It catalyses the reaction dihydroxyacetone phosphate = methylglyoxal + phosphate. Functionally, catalyzes the formation of methylglyoxal from dihydroxyacetone phosphate. This Sodalis glossinidius (strain morsitans) protein is Methylglyoxal synthase.